The primary structure comprises 301 residues: Lipoyl synthase (301 aa).

[4Fe-4S] cluster is bound by residues Cys-53, Cys-58, Cys-64, Cys-79, Cys-83, Cys-86, and Ser-290. A Radical SAM core domain is found at 65–279; the sequence is WSRKTATYML…RIYGKSIGFK (215 aa).

Belongs to the radical SAM superfamily. Lipoyl synthase family. Requires [4Fe-4S] cluster as cofactor.

It is found in the cytoplasm. It carries out the reaction [[Fe-S] cluster scaffold protein carrying a second [4Fe-4S](2+) cluster] + N(6)-octanoyl-L-lysyl-[protein] + 2 oxidized [2Fe-2S]-[ferredoxin] + 2 S-adenosyl-L-methionine + 4 H(+) = [[Fe-S] cluster scaffold protein] + N(6)-[(R)-dihydrolipoyl]-L-lysyl-[protein] + 4 Fe(3+) + 2 hydrogen sulfide + 2 5'-deoxyadenosine + 2 L-methionine + 2 reduced [2Fe-2S]-[ferredoxin]. It participates in protein modification; protein lipoylation via endogenous pathway; protein N(6)-(lipoyl)lysine from octanoyl-[acyl-carrier-protein]: step 2/2. Catalyzes the radical-mediated insertion of two sulfur atoms into the C-6 and C-8 positions of the octanoyl moiety bound to the lipoyl domains of lipoate-dependent enzymes, thereby converting the octanoylated domains into lipoylated derivatives. This Leptospira interrogans serogroup Icterohaemorrhagiae serovar Lai (strain 56601) protein is Lipoyl synthase.